Reading from the N-terminus, the 391-residue chain is Phosphoglycerate kinase (391 aa).

Substrate-binding positions include 21-23, Arg36, 59-62, Arg113, and Arg146; these read DLN and HLGR. Residues Lys197, Glu319, and 345–348 contribute to the ATP site; that span reads GGDT.

The protein belongs to the phosphoglycerate kinase family. In terms of assembly, monomer.

Its subcellular location is the cytoplasm. The enzyme catalyses (2R)-3-phosphoglycerate + ATP = (2R)-3-phospho-glyceroyl phosphate + ADP. It functions in the pathway carbohydrate degradation; glycolysis; pyruvate from D-glyceraldehyde 3-phosphate: step 2/5. In Pseudoalteromonas atlantica (strain T6c / ATCC BAA-1087), this protein is Phosphoglycerate kinase.